The sequence spans 261 residues: Methionine aminopeptidase (261 aa).

Residue His78 coordinates substrate. The a divalent metal cation site is built by Asp96, Asp107, and His170. Residue His177 participates in substrate binding. A divalent metal cation contacts are provided by Glu202 and Glu233.

The protein belongs to the peptidase M24A family. Methionine aminopeptidase type 1 subfamily. In terms of assembly, monomer. Co(2+) is required as a cofactor. The cofactor is Zn(2+). Requires Mn(2+) as cofactor. Fe(2+) serves as cofactor.

It catalyses the reaction Release of N-terminal amino acids, preferentially methionine, from peptides and arylamides.. In terms of biological role, removes the N-terminal methionine from nascent proteins. The N-terminal methionine is often cleaved when the second residue in the primary sequence is small and uncharged (Met-Ala-, Cys, Gly, Pro, Ser, Thr, or Val). Requires deformylation of the N(alpha)-formylated initiator methionine before it can be hydrolyzed. This chain is Methionine aminopeptidase, found in Buchnera aphidicola subsp. Schizaphis graminum (strain Sg).